The sequence spans 292 residues: MAQHDQLHRYLFENYAVRGELVTVSETWKQILENHDYPMPVKTLLGELLVATSLLTATLKFAGDITVQLQGDGPMTLAVINGNNRQQMRGVARVQGDVPADADLKTLVGNGYLVITITPEEGERYQGVVGLEGDTLAACLEDYFMRSEQLPTRLFIRTGEAQGQPAAGGMLLQVLPAQDAQTDDFNHLATLTETIKADELFTLPANDVLWRLYHEEEVTVYDPQAVEFKCTCSRERCADALRTLPDEEVAQILEEDGEVDMHCDYCGTHYVFDAMDIAGIRKNASPADPQVH.

2 cysteine pairs are disulfide-bonded: Cys230–Cys232 and Cys263–Cys266.

It belongs to the HSP33 family. Post-translationally, under oxidizing conditions two disulfide bonds are formed involving the reactive cysteines. Under reducing conditions zinc is bound to the reactive cysteines and the protein is inactive.

The protein localises to the cytoplasm. Functionally, redox regulated molecular chaperone. Protects both thermally unfolding and oxidatively damaged proteins from irreversible aggregation. Plays an important role in the bacterial defense system toward oxidative stress. This is 33 kDa chaperonin from Cronobacter sakazakii (strain ATCC BAA-894) (Enterobacter sakazakii).